Reading from the N-terminus, the 328-residue chain is 4-hydroxy-3-methylbut-2-enyl diphosphate reductase (328 aa).

[4Fe-4S] cluster is bound at residue Cys-24. His-55 and His-88 together coordinate (2E)-4-hydroxy-3-methylbut-2-enyl diphosphate. The dimethylallyl diphosphate site is built by His-55 and His-88. The isopentenyl diphosphate site is built by His-55 and His-88. Cys-110 is a [4Fe-4S] cluster binding site. Position 138 (His-138) interacts with (2E)-4-hydroxy-3-methylbut-2-enyl diphosphate. His-138 serves as a coordination point for dimethylallyl diphosphate. An isopentenyl diphosphate-binding site is contributed by His-138. Glu-140 acts as the Proton donor in catalysis. (2E)-4-hydroxy-3-methylbut-2-enyl diphosphate is bound at residue Thr-178. Cys-208 is a [4Fe-4S] cluster binding site. (2E)-4-hydroxy-3-methylbut-2-enyl diphosphate contacts are provided by Ser-236, Ser-237, Asn-238, and Ser-279. Dimethylallyl diphosphate contacts are provided by Ser-236, Ser-237, Asn-238, and Ser-279. 4 residues coordinate isopentenyl diphosphate: Ser-236, Ser-237, Asn-238, and Ser-279.

This sequence belongs to the IspH family. [4Fe-4S] cluster serves as cofactor.

The enzyme catalyses isopentenyl diphosphate + 2 oxidized [2Fe-2S]-[ferredoxin] + H2O = (2E)-4-hydroxy-3-methylbut-2-enyl diphosphate + 2 reduced [2Fe-2S]-[ferredoxin] + 2 H(+). The catalysed reaction is dimethylallyl diphosphate + 2 oxidized [2Fe-2S]-[ferredoxin] + H2O = (2E)-4-hydroxy-3-methylbut-2-enyl diphosphate + 2 reduced [2Fe-2S]-[ferredoxin] + 2 H(+). It participates in isoprenoid biosynthesis; dimethylallyl diphosphate biosynthesis; dimethylallyl diphosphate from (2E)-4-hydroxy-3-methylbutenyl diphosphate: step 1/1. The protein operates within isoprenoid biosynthesis; isopentenyl diphosphate biosynthesis via DXP pathway; isopentenyl diphosphate from 1-deoxy-D-xylulose 5-phosphate: step 6/6. Catalyzes the conversion of 1-hydroxy-2-methyl-2-(E)-butenyl 4-diphosphate (HMBPP) into a mixture of isopentenyl diphosphate (IPP) and dimethylallyl diphosphate (DMAPP). Acts in the terminal step of the DOXP/MEP pathway for isoprenoid precursor biosynthesis. This Ehrlichia ruminantium (strain Welgevonden) protein is 4-hydroxy-3-methylbut-2-enyl diphosphate reductase.